The chain runs to 329 residues: Ribosomal RNA small subunit methyltransferase H (329 aa).

S-adenosyl-L-methionine-binding positions include 39-41, D56, F85, D106, and Q113; that span reads GGY. A disordered region spans residues 289–308; it reads SGAIRPTPEEEARNPRARSA.

It belongs to the methyltransferase superfamily. RsmH family.

It is found in the cytoplasm. It carries out the reaction cytidine(1402) in 16S rRNA + S-adenosyl-L-methionine = N(4)-methylcytidine(1402) in 16S rRNA + S-adenosyl-L-homocysteine + H(+). Specifically methylates the N4 position of cytidine in position 1402 (C1402) of 16S rRNA. The sequence is that of Ribosomal RNA small subunit methyltransferase H from Novosphingobium aromaticivorans (strain ATCC 700278 / DSM 12444 / CCUG 56034 / CIP 105152 / NBRC 16084 / F199).